The chain runs to 599 residues: 1-deoxy-D-xylulose-5-phosphate synthase (599 aa).

Thiamine diphosphate contacts are provided by residues His63 and 104–106 (GHS). Residue Asp135 coordinates Mg(2+). Thiamine diphosphate contacts are provided by residues 136-137 (GA), Asn164, Tyr271, and Glu352. Asn164 is a Mg(2+) binding site.

This sequence belongs to the transketolase family. DXPS subfamily. In terms of assembly, homodimer. Requires Mg(2+) as cofactor. Thiamine diphosphate is required as a cofactor.

It carries out the reaction D-glyceraldehyde 3-phosphate + pyruvate + H(+) = 1-deoxy-D-xylulose 5-phosphate + CO2. The protein operates within metabolic intermediate biosynthesis; 1-deoxy-D-xylulose 5-phosphate biosynthesis; 1-deoxy-D-xylulose 5-phosphate from D-glyceraldehyde 3-phosphate and pyruvate: step 1/1. Its function is as follows. Catalyzes the acyloin condensation reaction between C atoms 2 and 3 of pyruvate and glyceraldehyde 3-phosphate to yield 1-deoxy-D-xylulose-5-phosphate (DXP). The protein is 1-deoxy-D-xylulose-5-phosphate synthase of Nitratiruptor sp. (strain SB155-2).